A 416-amino-acid polypeptide reads, in one-letter code: N-carbamoyl-L-amino-acid amidohydrolase (416 aa).

A divalent metal cation-binding residues include His-87, Asp-98, Glu-133, and His-194. An N-carbamoyl-L-alpha-amino acid-binding residues include Gln-197, His-230, Asn-279, Arg-292, and Gly-361. The involved in dimerization stretch occupies residues 213–331 (HCQGLWWLEF…SIEAVGHFDP (119 aa)). Residue His-386 participates in a divalent metal cation binding.

The protein belongs to the peptidase M20 family. Homodimer. It depends on Mn(2+) as a cofactor. Ni(2+) serves as cofactor. Co(2+) is required as a cofactor. The cofactor is Fe(2+).

The enzyme catalyses an N-carbamoyl-L-alpha-amino acid + H2O + 2 H(+) = an L-alpha-amino acid + NH4(+) + CO2. The catalysed reaction is N-carbamoyl-L-methionine + H2O + 2 H(+) = L-methionine + NH4(+) + CO2. It catalyses the reaction N-acetyl-L-methionine + H2O = L-methionine + acetate. It carries out the reaction N(alpha)-formyl-L-methionine + H2O = formate + L-methionine. The enzyme catalyses N-carbamoyl-L-alanine + H2O + 2 H(+) = L-alanine + NH4(+) + CO2. The catalysed reaction is N-carbamoyl-L-cysteine + H2O + 2 H(+) = L-cysteine + NH4(+) + CO2. It catalyses the reaction N-carbamoyl-L-tryptophan + H2O + 2 H(+) = L-tryptophan + NH4(+) + CO2. It carries out the reaction N-carbamoyl-L-valine + H2O + 2 H(+) = L-valine + NH4(+) + CO2. The enzyme catalyses N-carbamoyl-L-phenylalanine + H2O + 2 H(+) = L-phenylalanine + NH4(+) + CO2. With respect to regulation, strongly inhibited by Hg(2+), Cu(2+), Zn(2+), Pb(2+) and Fe(3+) ions, and slightly inhibited by Na(+) and K(+) ions. Beta-mercaptoethanol and 5,5'-dithiobis-(2-nitrobenzoic acid)(DTNB) cause 34% and 42% inhibition, respectively. Its function is as follows. Catalyzes the hydrolysis of both aliphatic and aromatic N-carbamoyl-L-alpha-amino acids to free L-alpha-amino acids. Is strictly L-specific since it is inactive toward N-carbamoyl-D-alpha-amino acids. Is also able to hydrolyze N-formyl-L-methionine and N-acetyl-L-methionine, but not ureidosuccinate or 3-ureidopropanoate. This chain is N-carbamoyl-L-amino-acid amidohydrolase, found in Rhizobium meliloti (Ensifer meliloti).